Reading from the N-terminus, the 308-residue chain is 15-cis-phytoene synthase (308 aa).

The protein belongs to the phytoene/squalene synthase family. Requires ATP as cofactor. It depends on Mn(2+) as a cofactor. The cofactor is Mg(2+).

It carries out the reaction 2 (2E,6E,10E)-geranylgeranyl diphosphate = 15-cis-phytoene + 2 diphosphate. The protein operates within carotenoid biosynthesis; phytoene biosynthesis. In terms of biological role, involved in the biosynthesis of carotenoids. Catalyzes the condensation of two molecules of geranylgeranyl diphosphate (GGPP) to give prephytoene diphosphate (PPPP) and the subsequent rearrangement of the cyclopropylcarbinyl intermediate to yield 15-cis-phytoene. In Synechococcus elongatus (strain ATCC 33912 / PCC 7942 / FACHB-805) (Anacystis nidulans R2), this protein is 15-cis-phytoene synthase (crtB).